Reading from the N-terminus, the 1407-residue chain is DNA-directed RNA polymerase subunit beta' (1407 aa).

Zn(2+) contacts are provided by cysteine 70, cysteine 72, cysteine 85, and cysteine 88. Mg(2+) contacts are provided by aspartate 460, aspartate 462, and aspartate 464. N6-acetyllysine is present on lysine 972.

This sequence belongs to the RNA polymerase beta' chain family. As to quaternary structure, the RNAP catalytic core consists of 2 alpha, 1 beta, 1 beta' and 1 omega subunit. When a sigma factor is associated with the core the holoenzyme is formed, which can initiate transcription. The cofactor is Mg(2+). Zn(2+) serves as cofactor.

It carries out the reaction RNA(n) + a ribonucleoside 5'-triphosphate = RNA(n+1) + diphosphate. In terms of biological role, DNA-dependent RNA polymerase catalyzes the transcription of DNA into RNA using the four ribonucleoside triphosphates as substrates. This Escherichia coli O6:K15:H31 (strain 536 / UPEC) protein is DNA-directed RNA polymerase subunit beta'.